The following is a 447-amino-acid chain: UPF0210 protein LCK_00974 (447 aa).

The protein belongs to the UPF0210 family. As to quaternary structure, homodimer.

In Leuconostoc citreum (strain KM20), this protein is UPF0210 protein LCK_00974.